A 360-amino-acid polypeptide reads, in one-letter code: Photosystem II protein D1 2 (360 aa).

A run of 3 helical transmembrane segments spans residues 29–46 (YVGW…TATI), 118–133 (HFLI…EWEL), and 142–156 (WICV…AATA). Position 118 (H118) interacts with chlorophyll a. Residue Y126 coordinates pheophytin a. The [CaMn4O5] cluster site is built by D170 and E189. The helical transmembrane segment at 197–218 (FHMLGVAGVFGGSLFSAMHGSL) threads the bilayer. H198 is a binding site for chlorophyll a. A quinone contacts are provided by residues H215 and 264 to 265 (SF). A Fe cation-binding site is contributed by H215. Residue H272 participates in Fe cation binding. The helical transmembrane segment at 274–288 (FLAAWPVVGIWFTSL) threads the bilayer. Residues H332, E333, D342, and A344 each coordinate [CaMn4O5] cluster. A propeptide spanning residues 345–360 (AGEATPVALTAPAING) is cleaved from the precursor.

This sequence belongs to the reaction center PufL/M/PsbA/D family. In terms of assembly, PSII is composed of 1 copy each of membrane proteins PsbA, PsbB, PsbC, PsbD, PsbE, PsbF, PsbH, PsbI, PsbJ, PsbK, PsbL, PsbM, PsbT, PsbX, PsbY, PsbZ, Psb30/Ycf12, peripheral proteins PsbO, CyanoQ (PsbQ), PsbU, PsbV and a large number of cofactors. It forms dimeric complexes. It depends on The D1/D2 heterodimer binds P680, chlorophylls that are the primary electron donor of PSII, and subsequent electron acceptors. It shares a non-heme iron and each subunit binds pheophytin, quinone, additional chlorophylls, carotenoids and lipids. D1 provides most of the ligands for the Mn4-Ca-O5 cluster of the oxygen-evolving complex (OEC). There is also a Cl(-1) ion associated with D1 and D2, which is required for oxygen evolution. The PSII complex binds additional chlorophylls, carotenoids and specific lipids. as a cofactor. Post-translationally, tyr-161 forms a radical intermediate that is referred to as redox-active TyrZ, YZ or Y-Z. In terms of processing, C-terminally processed by CtpA; processing is essential to allow assembly of the oxygen-evolving complex and thus photosynthetic growth.

The protein localises to the cellular thylakoid membrane. It carries out the reaction 2 a plastoquinone + 4 hnu + 2 H2O = 2 a plastoquinol + O2. Photosystem II (PSII) is a light-driven water:plastoquinone oxidoreductase that uses light energy to abstract electrons from H(2)O, generating O(2) and a proton gradient subsequently used for ATP formation. It consists of a core antenna complex that captures photons, and an electron transfer chain that converts photonic excitation into a charge separation. The D1/D2 (PsbA/PsbD) reaction center heterodimer binds P680, the primary electron donor of PSII as well as several subsequent electron acceptors. The polypeptide is Photosystem II protein D1 2 (Synechococcus elongatus (strain ATCC 33912 / PCC 7942 / FACHB-805) (Anacystis nidulans R2)).